Here is a 75-residue protein sequence, read N- to C-terminus: Penaeidin-3m (75 aa).

Positions 1-19 (MRLVVCLVFLASFALVCQG) are cleaved as a signal peptide. Gln20 carries the post-translational modification Pyrrolidone carboxylic acid. 3 cysteine pairs are disulfide-bonded: Cys44-Cys59, Cys48-Cys66, and Cys60-Cys67. Ser74 carries the serine amide modification.

Belongs to the penaeidin family.

The protein localises to the cytoplasmic granule. Antibacterial and antifungal activity. Presents chitin-binding activity. The polypeptide is Penaeidin-3m (Penaeus setiferus (Atlantic white shrimp)).